Here is a 284-residue protein sequence, read N- to C-terminus: Bifunctional protein FolD (284 aa).

Residues 165–167, serine 190, and valine 231 contribute to the NADP(+) site; that span reads GRS.

It belongs to the tetrahydrofolate dehydrogenase/cyclohydrolase family. As to quaternary structure, homodimer.

The catalysed reaction is (6R)-5,10-methylene-5,6,7,8-tetrahydrofolate + NADP(+) = (6R)-5,10-methenyltetrahydrofolate + NADPH. It catalyses the reaction (6R)-5,10-methenyltetrahydrofolate + H2O = (6R)-10-formyltetrahydrofolate + H(+). The protein operates within one-carbon metabolism; tetrahydrofolate interconversion. Functionally, catalyzes the oxidation of 5,10-methylenetetrahydrofolate to 5,10-methenyltetrahydrofolate and then the hydrolysis of 5,10-methenyltetrahydrofolate to 10-formyltetrahydrofolate. The polypeptide is Bifunctional protein FolD (Geobacillus thermodenitrificans (strain NG80-2)).